Reading from the N-terminus, the 548-residue chain is Fumarate hydratase class I, aerobic (548 aa).

[4Fe-4S] cluster contacts are provided by Cys-105, Cys-224, and Cys-318.

Belongs to the class-I fumarase family. In terms of assembly, homodimer. The cofactor is [4Fe-4S] cluster.

The enzyme catalyses (S)-malate = fumarate + H2O. It catalyses the reaction oxaloacetate = enol-oxaloacetate. The protein operates within carbohydrate metabolism; tricarboxylic acid cycle; (S)-malate from fumarate: step 1/1. In terms of biological role, catalyzes the reversible hydration of fumarate to (S)-malate. Functions as an aerobic enzyme in the direction of malate formation as part of the citric acid cycle. Accounts for about 80% of the fumarase activity when the bacteria grow aerobically. To a lesser extent, also displays D-tartrate dehydratase activity in vitro, but is not able to convert (R)-malate, L-tartrate or meso-tartrate. Can also catalyze the isomerization of enol- to keto-oxaloacetate. The chain is Fumarate hydratase class I, aerobic from Escherichia coli O6:H1 (strain CFT073 / ATCC 700928 / UPEC).